A 436-amino-acid polypeptide reads, in one-letter code: GTPase Der (436 aa).

2 EngA-type G domains span residues 4–167 (PTVA…PVEE) and 175–351 (IRFS…ESQN). GTP-binding positions include 10–17 (GRPNVGKS), 57–61 (DTGGI), 119–122 (NKVD), 181–188 (GRPNVGKS), 229–233 (DTAGM), and 294–297 (NKWD). Residues 352 to 436 (KRIPSAVLND…PIHLIARKRK (85 aa)) form the KH-like domain.

The protein belongs to the TRAFAC class TrmE-Era-EngA-EngB-Septin-like GTPase superfamily. EngA (Der) GTPase family. As to quaternary structure, associates with the 50S ribosomal subunit.

In terms of biological role, GTPase that plays an essential role in the late steps of ribosome biogenesis. The chain is GTPase Der from Streptococcus pyogenes serotype M3 (strain ATCC BAA-595 / MGAS315).